The following is a 247-amino-acid chain: Probable chemoreceptor glutamine deamidase CheD (247 aa).

The tract at residues 204-247 (KRPAAPQPARPRIELFGGRGTAPGAGSPSAGSPYAANLSRKQEA) is disordered. Over residues 227-239 (GAGSPSAGSPYAA) the composition is skewed to low complexity.

It belongs to the CheD family.

It catalyses the reaction L-glutaminyl-[protein] + H2O = L-glutamyl-[protein] + NH4(+). In terms of biological role, probably deamidates glutamine residues to glutamate on methyl-accepting chemotaxis receptors (MCPs), playing an important role in chemotaxis. This Burkholderia orbicola (strain AU 1054) protein is Probable chemoreceptor glutamine deamidase CheD.